Reading from the N-terminus, the 474-residue chain is tRNA modification GTPase MnmE (474 aa).

Residues arginine 23, glutamate 86, and lysine 125 each coordinate (6S)-5-formyl-5,6,7,8-tetrahydrofolate. The TrmE-type G domain maps to 221–396 (GIPVAIVGEP…LKEKLLEYVN (176 aa)). Residue asparagine 231 participates in K(+) binding. GTP contacts are provided by residues 231-236 (NVGKST), 250-256 (SEIAGTT), and 275-278 (DTAG). Serine 235 is a binding site for Mg(2+). Positions 250, 252, and 255 each coordinate K(+). Threonine 256 contacts Mg(2+). Residue lysine 474 coordinates (6S)-5-formyl-5,6,7,8-tetrahydrofolate.

This sequence belongs to the TRAFAC class TrmE-Era-EngA-EngB-Septin-like GTPase superfamily. TrmE GTPase family. In terms of assembly, homodimer. Heterotetramer of two MnmE and two MnmG subunits. Requires K(+) as cofactor.

The protein localises to the cytoplasm. Exhibits a very high intrinsic GTPase hydrolysis rate. Involved in the addition of a carboxymethylaminomethyl (cmnm) group at the wobble position (U34) of certain tRNAs, forming tRNA-cmnm(5)s(2)U34. In Christiangramia forsetii (strain DSM 17595 / CGMCC 1.15422 / KT0803) (Gramella forsetii), this protein is tRNA modification GTPase MnmE.